Here is a 394-residue protein sequence, read N- to C-terminus: Phosphoglycerate kinase (394 aa).

Substrate is bound by residues 21–23, R36, 59–62, R118, and R151; these read DFN and HLGR. S183 is modified (phosphoserine). K201 serves as a coordination point for ATP. Position 299 is a phosphothreonine (T299). ATP-binding positions include E323 and 350 to 353; that span reads GGDS.

The protein belongs to the phosphoglycerate kinase family. Monomer.

The protein localises to the cytoplasm. The catalysed reaction is (2R)-3-phosphoglycerate + ATP = (2R)-3-phospho-glyceroyl phosphate + ADP. It functions in the pathway carbohydrate degradation; glycolysis; pyruvate from D-glyceraldehyde 3-phosphate: step 2/5. The chain is Phosphoglycerate kinase from Geobacillus kaustophilus (strain HTA426).